A 141-amino-acid chain; its full sequence is MSKKNSVAIMTTISAFLFCAVIVAASLSPLAGTGAAANQFNSAGMWSAVGMILVLYFIPFLVYMLGVDAMRYVMAVLCGFGLLIHLSSAGFILMFSFFSDHLLSEVIFVLGVSLAAAAVNVIWFVAAFRSGAEKTSVNTLT.

4 consecutive transmembrane segments (helical) span residues Val-7–Leu-27, Ser-47–Val-67, Ala-75–Phe-95, and Val-106–Ala-126.

Its subcellular location is the cell membrane. This is an uncharacterized protein from Bacillus subtilis (strain 168).